The chain runs to 242 residues: Uridylate kinase (242 aa).

17 to 20 is a binding site for ATP; that stretch reads KLSG. Glycine 59 provides a ligand contact to UMP. ATP contacts are provided by glycine 60 and arginine 64. Residues aspartate 79 and 140 to 147 contribute to the UMP site; that span reads TGNPFFTT. ATP is bound by residues threonine 167, tyrosine 173, and aspartate 176.

This sequence belongs to the UMP kinase family. Homohexamer.

The protein resides in the cytoplasm. It catalyses the reaction UMP + ATP = UDP + ADP. The protein operates within pyrimidine metabolism; CTP biosynthesis via de novo pathway; UDP from UMP (UMPK route): step 1/1. With respect to regulation, inhibited by UTP. Catalyzes the reversible phosphorylation of UMP to UDP. The chain is Uridylate kinase from Marinobacter nauticus (strain ATCC 700491 / DSM 11845 / VT8) (Marinobacter aquaeolei).